The sequence spans 874 residues: Coatomer subunit gamma-1 (874 aa).

The segment covering 1 to 11 has biased composition (basic and acidic residues); sequence MLKKFDKKDEE. Residues 1–21 are disordered; it reads MLKKFDKKDEESGGGSNPLQH. HEAT repeat units follow at residues 64-101, 283-320, 322-355, and 356-392; these read TEATEAFFAMTKLFQSNDPTLRRMCYLTIKEMSCIAED, KELAPAVSVLQLFCSSPKAALRYAAVRTLNKVAMKHPS, VTACNLDLENLVTDSNRSIATLAITTLLKTGSES, and SIDRLMKQISSFMSEISDEFKVVVVQAISALCQKYPR. T594 carries the phosphothreonine modification. The segment at 609–874 is interaction with ZNF289/ARFGAP2; it reads RQEIFQEQLA…PVDIILASVG (266 aa).

This sequence belongs to the COPG family. As to quaternary structure, oligomeric complex that consists of at least the alpha, beta, beta', gamma, delta, epsilon and zeta subunits. Interacts with ZNF289/ARFGAP2 through its C-terminal appendage domain. Interacts with EGFR upon EGF treatment; interaction is essential for regulation of EGF-dependent nuclear transport of EGFR by retrograde trafficking from the Golgi to the ER. The coatomer interacts with KDEL receptors; the interaction is important for retrograde trafficking of KDEL-bearing proteins from the Golgi to the endoplasmic reticulum. Interacts with COPB1. Interacts with TMED10 (via C-terminus). Interacts with TMED2, TMED3, TMED7 and TMED9.

It is found in the cytoplasm. The protein resides in the cytosol. It localises to the golgi apparatus membrane. The protein localises to the cytoplasmic vesicle. Its subcellular location is the COPI-coated vesicle membrane. Its function is as follows. The coatomer is a cytosolic protein complex that binds to dilysine motifs and reversibly associates with Golgi non-clathrin-coated vesicles, which further mediate biosynthetic protein transport from the ER, via the Golgi up to the trans Golgi network. Coatomer complex is required for budding from Golgi membranes, and is essential for the retrograde Golgi-to-ER transport of dilysine-tagged proteins. In mammals, the coatomer can only be recruited by membranes associated to ADP-ribosylation factors (ARFs), which are small GTP-binding proteins; the complex also influences the Golgi structural integrity, as well as the processing, activity, and endocytic recycling of LDL receptors. Required for limiting lipid storage in lipid droplets. Involved in lipid homeostasis by regulating the presence of perilipin family members PLIN2 and PLIN3 at the lipid droplet surface and promoting the association of adipocyte triglyceride lipase (PNPLA2) with the lipid droplet surface to mediate lipolysis. The polypeptide is Coatomer subunit gamma-1 (Copg1) (Rattus norvegicus (Rat)).